The primary structure comprises 1470 residues: Calmodulin-regulated spectrin-associated protein 2 (1470 aa).

In terms of domain architecture, Calponin-homology (CH) spans 222-335 (WKLVPARYRK…FMAELFWWFE (114 aa)). The disordered stretch occupies residues 374 to 397 (SSSSSDFTSRYTRPQTHSSVSGGI). The segment covering 380–390 (FTSRYTRPQTH) has biased composition (polar residues). Residues serine 402 and serine 404 each carry the phosphoserine modification. Threonine 412 carries the post-translational modification Phosphothreonine. Phosphoserine is present on residues serine 450, serine 581, serine 582, serine 594, and serine 656. 2 disordered regions span residues 580–622 (QSSP…EDSS) and 648–712 (ASNP…EGSE). Threonine 661 is modified (phosphothreonine). Serine 663 carries the phosphoserine modification. Positions 663–682 (STKSQPGSSASSSSGVKMTS) are enriched in low complexity. The segment covering 686 to 696 (QKFRKLNHTDG) has biased composition (basic and acidic residues). Positions 739 to 776 (LLASEMVHLRMRLEEKRRAIEAQKKKMEAAFTKQRQKM) form a coiled coil. The segment covering 796-835 (REEAAGAEDEKVYTDRAKEKESQKMDGQRSKSLADIKESM) has biased composition (basic and acidic residues). The tract at residues 796–864 (REEAAGAEDE…QWNLTSPSEE (69 aa)) is disordered. The residue at position 845 (serine 845) is a Phosphoserine. Positions 870–909 (ELLEYTKSIEKLNSSLHFLQQEMQRLSLQQEMLMQMREQQ) form a coiled coil. Residues 905-1016 (MREQQSWVIS…IQTRSFVCFG (112 aa)) are MBD region. A phosphoserine mark is found at serine 914 and serine 919. Disordered regions lie at residues 930–1059 (RQAG…PLES) and 1078–1099 (NEDQ…PTAP). Positions 935–946 (SSAAAPFSADSP) are enriched in low complexity. Residues 952-971 (SPQSSTRKSASFSVKNQRTP) show a composition bias toward polar residues. Phosphothreonine occurs at positions 979, 984, and 986. A phosphoserine mark is found at serine 990 and serine 1001. The segment covering 1001–1011 (SPSQVPIQTRS) has biased composition (polar residues). Composition is skewed to basic and acidic residues over residues 1020–1037 (EPQK…EPSE) and 1044–1056 (SCDH…EVKP). Pro residues predominate over residues 1086-1098 (TDPPPKPVFPPTA). Serine 1129 carries the post-translational modification Phosphoserine. Positions 1147 to 1219 (KDDQKAENDM…REFIRQEYMR (73 aa)) form a coiled coil. Positions 1167–1233 (RLRREKETQL…KLMEDMDTVI (67 aa)) are enriched in basic and acidic residues. Residues 1167–1327 (RLRREKETQL…TTSSVASGTE (161 aa)) form a disordered region. A compositionally biased stretch (polar residues) spans 1268–1280 (SSLSLASLNTGDT). Phosphoserine is present on residues serine 1294, serine 1300, and serine 1302. The segment covering 1315–1327 (NASTTSSVASGTE) has biased composition (polar residues). Positions 1330 to 1464 (GPKLYKEPSA…QTKRPVTPKK (135 aa)) constitute a CKK domain.

This sequence belongs to the CAMSAP1 family. As to quaternary structure, interacts with CAMSAP3. Interacts with KATNA1 and KATNB1; leading to regulate the length of CAMSAP2-decorated microtubule stretches. Interacts with a complex formed by AKAP9 and PDE4DIP; this interaction, which is PDE4DIP isoform-specific, recruits CAMSAP2 to the Golgi. Interacts with MAPRE1/EB1. Present in the soma, axon, and dendritic shaft of hippocampal neurons (at protein level).

The protein resides in the cytoplasm. It localises to the cytoskeleton. The protein localises to the golgi apparatus. Its subcellular location is the cilium basal body. Key microtubule-organizing protein that specifically binds the minus-end of non-centrosomal microtubules and regulates their dynamics and organization. Specifically recognizes growing microtubule minus-ends and autonomously decorates and stabilizes microtubule lattice formed by microtubule minus-end polymerization. Acts on free microtubule minus-ends that are not capped by microtubule-nucleating proteins or other factors and protects microtubule minus-ends from depolymerization. In addition, it also reduces the velocity of microtubule polymerization. Through the microtubule cytoskeleton, also regulates the organization of cellular organelles including the Golgi and the early endosomes. Essential for the tethering, but not for nucleation of non-centrosomal microtubules at the Golgi: together with Golgi-associated proteins AKAP9 and PDE4DIP, required to tether non-centrosomal minus-end microtubules to the Golgi, an important step for polarized cell movement. Also acts as a regulator of neuronal polarity and development: localizes to non-centrosomal microtubule minus-ends in neurons and stabilizes non-centrosomal microtubules, which is required for neuronal polarity, axon specification and dendritic branch formation. Through the microtubule cytoskeleton, regulates the autophagosome transport. This chain is Calmodulin-regulated spectrin-associated protein 2, found in Rattus norvegicus (Rat).